Consider the following 192-residue polypeptide: Xanthine phosphoribosyltransferase (192 aa).

Leucine 20 and asparagine 27 together coordinate xanthine. A 5-phospho-alpha-D-ribose 1-diphosphate-binding site is contributed by 128–132 (AHGEA). Position 156 (lysine 156) interacts with xanthine.

Belongs to the purine/pyrimidine phosphoribosyltransferase family. Xpt subfamily. As to quaternary structure, homodimer.

It localises to the cytoplasm. It carries out the reaction XMP + diphosphate = xanthine + 5-phospho-alpha-D-ribose 1-diphosphate. The protein operates within purine metabolism; XMP biosynthesis via salvage pathway; XMP from xanthine: step 1/1. In terms of biological role, converts the preformed base xanthine, a product of nucleic acid breakdown, to xanthosine 5'-monophosphate (XMP), so it can be reused for RNA or DNA synthesis. The chain is Xanthine phosphoribosyltransferase from Lactobacillus acidophilus (strain ATCC 700396 / NCK56 / N2 / NCFM).